The following is a 177-amino-acid chain: ATP synthase subunit delta (177 aa).

This sequence belongs to the ATPase delta chain family. F-type ATPases have 2 components, F(1) - the catalytic core - and F(0) - the membrane proton channel. F(1) has five subunits: alpha(3), beta(3), gamma(1), delta(1), epsilon(1). F(0) has three main subunits: a(1), b(2) and c(10-14). The alpha and beta chains form an alternating ring which encloses part of the gamma chain. F(1) is attached to F(0) by a central stalk formed by the gamma and epsilon chains, while a peripheral stalk is formed by the delta and b chains.

It is found in the cell inner membrane. In terms of biological role, f(1)F(0) ATP synthase produces ATP from ADP in the presence of a proton or sodium gradient. F-type ATPases consist of two structural domains, F(1) containing the extramembraneous catalytic core and F(0) containing the membrane proton channel, linked together by a central stalk and a peripheral stalk. During catalysis, ATP synthesis in the catalytic domain of F(1) is coupled via a rotary mechanism of the central stalk subunits to proton translocation. Its function is as follows. This protein is part of the stalk that links CF(0) to CF(1). It either transmits conformational changes from CF(0) to CF(1) or is implicated in proton conduction. The sequence is that of ATP synthase subunit delta from Photorhabdus laumondii subsp. laumondii (strain DSM 15139 / CIP 105565 / TT01) (Photorhabdus luminescens subsp. laumondii).